The chain runs to 432 residues: Putative D-alanyl-D-alanine carboxypeptidase (432 aa).

The helical; Signal-anchor transmembrane segment at 7-25 threads the bilayer; it reads ATVLLTFSLSAFAVEYPVL.

The protein belongs to the peptidase S12 family. YfeW subfamily.

It is found in the cell inner membrane. The catalysed reaction is Preferential cleavage: (Ac)2-L-Lys-D-Ala-|-D-Ala. Also transpeptidation of peptidyl-alanyl moieties that are N-acyl substituents of D-alanine.. This is Putative D-alanyl-D-alanine carboxypeptidase from Salmonella typhimurium (strain LT2 / SGSC1412 / ATCC 700720).